Reading from the N-terminus, the 266-residue chain is N-acetylneuraminate lyase B (266 aa).

2 residues coordinate aceneuramate: T51 and T52. The active-site Proton donor is Y143. The active-site Schiff-base intermediate with substrate is K173. Positions 175, 197, 199, 200, and 216 each coordinate aceneuramate.

Belongs to the DapA family. NanA subfamily. In terms of assembly, homotetramer.

The protein localises to the cytoplasm. It catalyses the reaction aceneuramate = aldehydo-N-acetyl-D-mannosamine + pyruvate. The protein operates within amino-sugar metabolism; N-acetylneuraminate degradation. In terms of biological role, catalyzes the cleavage of N-acetylneuraminic acid (sialic acid) to form pyruvate and N-acetylmannosamine via a Schiff base intermediate. It prevents sialic acids from being recycled and returning to the cell surface. Involved in the N-glycolylneuraminic acid (Neu5Gc) degradation pathway. This is N-acetylneuraminate lyase B (npl-b) from Xenopus laevis (African clawed frog).